We begin with the raw amino-acid sequence, 89 residues long: MAVADINKSEVIKQFARGANDTGSPEVQVALLTTRINELTPHFKANMKDHHSRRGLLRMVSRRRRLLDYLKSNDADRYRALIEKLGLRK.

The protein belongs to the universal ribosomal protein uS15 family. As to quaternary structure, part of the 30S ribosomal subunit. Forms a bridge to the 50S subunit in the 70S ribosome, contacting the 23S rRNA.

One of the primary rRNA binding proteins, it binds directly to 16S rRNA where it helps nucleate assembly of the platform of the 30S subunit by binding and bridging several RNA helices of the 16S rRNA. In terms of biological role, forms an intersubunit bridge (bridge B4) with the 23S rRNA of the 50S subunit in the ribosome. The protein is Small ribosomal subunit protein uS15 of Cupriavidus necator (strain ATCC 17699 / DSM 428 / KCTC 22496 / NCIMB 10442 / H16 / Stanier 337) (Ralstonia eutropha).